The chain runs to 237 residues: Lectin alpha chain (237 aa).

Residues Glu8 and Asp10 each coordinate Mn(2+). Asp10, Tyr12, Asn14, and Asp19 together coordinate Ca(2+). Tyr12 contacts a carbohydrate. Residues Asp19, His24, and Ser34 each coordinate Mn(2+). 99–100 is a binding site for a carbohydrate; sequence LY. Asp208 contacts Ca(2+). Position 228 (Arg228) interacts with a carbohydrate.

It belongs to the leguminous lectin family. In terms of assembly, equilibrium between homodimer and homotetramer. Oligomerization is pH-dependent with homotetramers forming at pH 6.5 and above. In terms of processing, the beta and gamma chains are produced by partial proteolytic processing of the lectin alpha chain by an asparaginyl endopeptidase. Mixture of 60% alpha lectin and 40% of its beta and gamma proteolytic fragments. Seed.

It is found in the vacuole. It localises to the aleurone grain. Its function is as follows. D-mannose/D-glucose-binding lectin. Induces histamine release in mast cells from hamster and rat. Induces lymphocyte proliferation and IFNG production. In Macropsychanthus bicolor (Dioclea rostrata), this protein is Lectin alpha chain.